We begin with the raw amino-acid sequence, 95 residues long: uncharacterized protein (95 aa).

The segment at 65–95 (DANDYDTTTTEEEDSSTTTTTDNETNSDDDI) is disordered.

This is an uncharacterized protein from Lymantria dispar multicapsid nuclear polyhedrosis virus (LdMNPV).